The following is a 169-amino-acid chain: Cell division inhibitor SulA (169 aa).

The span at 1 to 13 shows a compositional bias: polar residues; that stretch reads MFTSAHANRSAQA. Residues 1-26 are disordered; it reads MFTSAHANRSAQASAPAGHYAHRSGE. Residues 106-112 are ftsZ binding; sequence ALRTGNY. The interval 162 to 169 is lon protease binding; the sequence is KIHSNLYH.

The protein belongs to the SulA family. Interacts with FtsZ. Is rapidly cleaved and degraded by the Lon protease once DNA damage is repaired.

Its function is as follows. Component of the SOS system and an inhibitor of cell division. Accumulation of SulA causes rapid cessation of cell division and the appearance of long, non-septate filaments. In the presence of GTP, binds a polymerization-competent form of FtsZ in a 1:1 ratio, thus inhibiting FtsZ polymerization and therefore preventing it from participating in the assembly of the Z ring. This mechanism prevents the premature segregation of damaged DNA to daughter cells during cell division. The chain is Cell division inhibitor SulA from Klebsiella pneumoniae subsp. pneumoniae (strain ATCC 700721 / MGH 78578).